The sequence spans 545 residues: Probable protein kinase UbiB (545 aa).

The Protein kinase domain occupies 123 to 501; the sequence is DFDIVPLASA…RVRQHQSHYL (379 aa). Residues 129–137 and K152 each bind ATP; that span reads LASASIAQV. The active-site Proton acceptor is D287. The next 2 helical transmembrane spans lie at 498 to 518 and 521 to 541; these read SHYLFGVGATLLLSGTAVVLS and EWDGLAAGLIAAGVVAWLVGW.

Belongs to the ABC1 family. UbiB subfamily.

The protein localises to the cell inner membrane. It functions in the pathway cofactor biosynthesis; ubiquinone biosynthesis [regulation]. Functionally, is probably a protein kinase regulator of UbiI activity which is involved in aerobic coenzyme Q (ubiquinone) biosynthesis. This is Probable protein kinase UbiB from Erwinia tasmaniensis (strain DSM 17950 / CFBP 7177 / CIP 109463 / NCPPB 4357 / Et1/99).